A 277-amino-acid chain; its full sequence is Inositol monophosphatase 1 (277 aa).

Mg(2+)-binding residues include E70, D90, I92, and D93. Substrate-binding positions include E70, 90–95 (DPIDGT), 194–196 (GTA), E213, and D220. Residue D220 coordinates Mg(2+).

This sequence belongs to the inositol monophosphatase superfamily. Homodimer. Mg(2+) serves as cofactor. In terms of tissue distribution, mostly expressed in brain, small intestine, testis, kidney, and spleen (at protein level).

Its subcellular location is the cytoplasm. It catalyses the reaction a myo-inositol phosphate + H2O = myo-inositol + phosphate. It carries out the reaction 1D-myo-inositol 1-phosphate + H2O = myo-inositol + phosphate. The catalysed reaction is 1D-myo-inositol 2-phosphate + H2O = myo-inositol + phosphate. The enzyme catalyses 1D-myo-inositol 3-phosphate + H2O = myo-inositol + phosphate. It catalyses the reaction 1D-myo-inositol 4-phosphate + H2O = myo-inositol + phosphate. It carries out the reaction 1D-myo-inositol 5-phosphate + H2O = myo-inositol + phosphate. The catalysed reaction is 1D-myo-inositol 6-phosphate + H2O = myo-inositol + phosphate. The enzyme catalyses scyllo-inositol 1-phosphate + H2O = scyllo-inositol + phosphate. It catalyses the reaction alpha-D-galactose 1-phosphate + H2O = D-galactose + phosphate. It carries out the reaction alpha-D-glucose 1-phosphate + H2O = D-glucose + phosphate. The catalysed reaction is D-glucose 6-phosphate + H2O = D-glucose + phosphate. The enzyme catalyses beta-D-fructose 1-phosphate + H2O = D-fructose + phosphate. It catalyses the reaction glycerol 2-phosphate + H2O = glycerol + phosphate. It carries out the reaction adenosine 2'-phosphate + H2O = adenosine + phosphate. It participates in polyol metabolism; myo-inositol biosynthesis; myo-inositol from D-glucose 6-phosphate: step 2/2. With respect to regulation, inhibited by Li(+), Ca(2+) and Mn(2+), but also by Mg(2+) at concentrations above 3 mM. Its function is as follows. Phosphatase involved in the dephosphorylation of myo-inositol monophosphate to generate myo-inositol. Is also able to dephosphorylate scyllo-inositol-phosphate, myo-inositol 1,4-diphosphate, scyllo-inositol-1,3-diphosphate and scyllo-inositol-1,4-diphosphate. Also dephosphorylates in vitro other sugar-phosphates including D-galactose-1-phosphate, glucose-1-phosphate, glucose-6-phosphate, fructose-1-phosphate, beta-glycerophosphate and 2'-AMP. Responsible for the provision of inositol required for synthesis of phosphatidylinositol and polyphosphoinositides, and involved in maintaining normal brain function. Has been implicated as the pharmacological target for lithium Li(+) action in brain. This Mus musculus (Mouse) protein is Inositol monophosphatase 1 (Impa1).